Consider the following 513-residue polypeptide: MQLNSTEISDLIKQRIEQFEVVSEARNEGTIVAVSDGIIRIHGLADVMQGEMIELPGNRFAIALNLERDSVGAVVMGPYATLAEGDKVKTTGRILEVPVGRGLLGRVVNTLGEPIDGKGPIDSDGFSPVEVIAPGVIERKSVDQPVQTGYKAVDSMIPIGRGQRELIIGDRQIGKTALAIDAIINQKDSGIKCVYVAVGQKASTIANVVRKLEEHGALANTIVVVATASEAAALQYLAPYSGCTMGEYFRDRGEDSLIVYDDLSKQAVAYRQISLLLKRPPGREAYPGDVFYLHSRLLERSSRVNAEYVEKFTKGEVKGQTGSLTALPIIETQAGDVSAFVPTNVISITDGQIFLETDLFNSGLRPAVNPGISVSRVGGAAQTKIIKKLSGGIRTALAQYRELAAFSQFASDLDDATRAQLEHGERVTELMKQKQYAPMSIADQSVSIFAAEKGYLKSVELNKIGDFEASLLSFMNSEHADLMKTINETGNYNADIEGELKASLDKFVETQTW.

169–176 (GDRQIGKT) provides a ligand contact to ATP.

It belongs to the ATPase alpha/beta chains family. In terms of assembly, F-type ATPases have 2 components, CF(1) - the catalytic core - and CF(0) - the membrane proton channel. CF(1) has five subunits: alpha(3), beta(3), gamma(1), delta(1), epsilon(1). CF(0) has three main subunits: a(1), b(2) and c(9-12). The alpha and beta chains form an alternating ring which encloses part of the gamma chain. CF(1) is attached to CF(0) by a central stalk formed by the gamma and epsilon chains, while a peripheral stalk is formed by the delta and b chains.

Its subcellular location is the cell inner membrane. It carries out the reaction ATP + H2O + 4 H(+)(in) = ADP + phosphate + 5 H(+)(out). Its function is as follows. Produces ATP from ADP in the presence of a proton gradient across the membrane. The alpha chain is a regulatory subunit. This chain is ATP synthase subunit alpha, found in Shewanella piezotolerans (strain WP3 / JCM 13877).